We begin with the raw amino-acid sequence, 60 residues long: Large ribosomal subunit protein uL30 (60 aa).

This sequence belongs to the universal ribosomal protein uL30 family. As to quaternary structure, part of the 50S ribosomal subunit.

The sequence is that of Large ribosomal subunit protein uL30 from Aromatoleum aromaticum (strain DSM 19018 / LMG 30748 / EbN1) (Azoarcus sp. (strain EbN1)).